A 121-amino-acid chain; its full sequence is MARIAGVNIPNHKHTVIGLTAIYGIGRSRARKICEATGIPTDKKVKDLTDPDQDALRKEIEKFLVEGDLRRETTMNIKRLMDLGCYRGVRHRKGLPLRGQRTRTNARTRKGPRKAGVALKK.

A disordered region spans residues 94 to 121 (GLPLRGQRTRTNARTRKGPRKAGVALKK).

The protein belongs to the universal ribosomal protein uS13 family. As to quaternary structure, part of the 30S ribosomal subunit. Forms a loose heterodimer with protein S19. Forms two bridges to the 50S subunit in the 70S ribosome.

Functionally, located at the top of the head of the 30S subunit, it contacts several helices of the 16S rRNA. In the 70S ribosome it contacts the 23S rRNA (bridge B1a) and protein L5 of the 50S subunit (bridge B1b), connecting the 2 subunits; these bridges are implicated in subunit movement. Contacts the tRNAs in the A and P-sites. The chain is Small ribosomal subunit protein uS13 from Ralstonia nicotianae (strain ATCC BAA-1114 / GMI1000) (Ralstonia solanacearum).